A 72-amino-acid chain; its full sequence is Conotoxin 3 (72 aa).

A signal peptide spans 1 to 22 (MKLTCVVIVAVLLLTACQLITA). The propeptide occupies 23–46 (DDSRGTQEHRALRSDTKLSMLTLR). Disulfide bonds link Cys47–Cys61, Cys54–Cys64, and Cys60–Cys71.

The protein belongs to the conotoxin O1 superfamily. As to expression, expressed by the venom duct.

It is found in the secreted. This is Conotoxin 3 from Conus striatus (Striated cone).